Consider the following 353-residue polypeptide: Photosystem II protein D1 (353 aa).

Position 2 is an N-acetylthreonine (T2). T2 is modified (phosphothreonine). A run of 3 helical transmembrane segments spans residues 29-46 (YIGW…TATS), 118-133 (HFLL…EWEL), and 142-156 (WIAV…AATA). Residue H118 coordinates chlorophyll a. Residue Y126 coordinates pheophytin a. 2 residues coordinate [CaMn4O5] cluster: D170 and E189. A helical membrane pass occupies residues 197 to 218 (FHMLGVAGVFGGSLFSAMHGSL). H198 serves as a coordination point for chlorophyll a. Residues H215 and 264–265 (SF) contribute to the a quinone site. H215 contacts Fe cation. H272 is a Fe cation binding site. A helical membrane pass occupies residues 274-288 (FLAAWPVVGIWFTAL). The [CaMn4O5] cluster site is built by H332, E333, D342, and A344. Residues 345–353 (AVESPSING) constitute a propeptide that is removed on maturation.

It belongs to the reaction center PufL/M/PsbA/D family. As to quaternary structure, PSII is composed of 1 copy each of membrane proteins PsbA, PsbB, PsbC, PsbD, PsbE, PsbF, PsbH, PsbI, PsbJ, PsbK, PsbL, PsbM, PsbT, PsbX, PsbY, PsbZ, Psb30/Ycf12, at least 3 peripheral proteins of the oxygen-evolving complex and a large number of cofactors. It forms dimeric complexes. The cofactor is The D1/D2 heterodimer binds P680, chlorophylls that are the primary electron donor of PSII, and subsequent electron acceptors. It shares a non-heme iron and each subunit binds pheophytin, quinone, additional chlorophylls, carotenoids and lipids. D1 provides most of the ligands for the Mn4-Ca-O5 cluster of the oxygen-evolving complex (OEC). There is also a Cl(-1) ion associated with D1 and D2, which is required for oxygen evolution. The PSII complex binds additional chlorophylls, carotenoids and specific lipids.. In terms of processing, tyr-161 forms a radical intermediate that is referred to as redox-active TyrZ, YZ or Y-Z. Post-translationally, C-terminally processed by CTPA; processing is essential to allow assembly of the oxygen-evolving complex and thus photosynthetic growth.

The protein localises to the plastid. It is found in the chloroplast thylakoid membrane. It catalyses the reaction 2 a plastoquinone + 4 hnu + 2 H2O = 2 a plastoquinol + O2. Its function is as follows. Photosystem II (PSII) is a light-driven water:plastoquinone oxidoreductase that uses light energy to abstract electrons from H(2)O, generating O(2) and a proton gradient subsequently used for ATP formation. It consists of a core antenna complex that captures photons, and an electron transfer chain that converts photonic excitation into a charge separation. The D1/D2 (PsbA/PsbD) reaction center heterodimer binds P680, the primary electron donor of PSII as well as several subsequent electron acceptors. The polypeptide is Photosystem II protein D1 (Sinapis alba (White mustard)).